The sequence spans 239 residues: Phosphothreonine lyase OspF (239 aa).

H104 (proton donor) is an active-site residue. The active-site Proton acceptor is K134.

It belongs to the phosphothreonine lyase family.

The protein localises to the secreted. In terms of biological role, catalyzes the removal of the phosphate group from the phosphothreonine in the mitogen-activated protein kinases such as MAPK2/ERK2, MAPK3/ERK1, MAPK8 and MAPK14 in an irreversible reaction, thus preventing the downstream phosphorylation of histone H3. This epigenetic modification results in inhibition of the transcription of a specific subset of pro-inflammatory genes, and ultimately to a reduced immune response against the invading pathogen. The diminished immune response enhances the bacterium's ability to disseminate and multiply within the host. In Shigella dysenteriae serotype 1 (strain Sd197), this protein is Phosphothreonine lyase OspF (ospF).